The chain runs to 316 residues: Ribonuclease Z (316 aa).

7 residues coordinate Zn(2+): histidine 63, histidine 65, aspartate 67, histidine 68, histidine 143, aspartate 213, and histidine 271. The active-site Proton acceptor is aspartate 67.

It belongs to the RNase Z family. In terms of assembly, homodimer. Requires Zn(2+) as cofactor.

The enzyme catalyses Endonucleolytic cleavage of RNA, removing extra 3' nucleotides from tRNA precursor, generating 3' termini of tRNAs. A 3'-hydroxy group is left at the tRNA terminus and a 5'-phosphoryl group is left at the trailer molecule.. Its function is as follows. Zinc phosphodiesterase, which displays some tRNA 3'-processing endonuclease activity. Probably involved in tRNA maturation, by removing a 3'-trailer from precursor tRNA. This Bacteroides thetaiotaomicron (strain ATCC 29148 / DSM 2079 / JCM 5827 / CCUG 10774 / NCTC 10582 / VPI-5482 / E50) protein is Ribonuclease Z.